Here is a 276-residue protein sequence, read N- to C-terminus: Release factor glutamine methyltransferase (276 aa).

Residues 116 to 120 (GTGTG), D139, W167, and N182 each bind S-adenosyl-L-methionine. Residue 182-185 (NPPY) coordinates substrate.

The protein belongs to the protein N5-glutamine methyltransferase family. PrmC subfamily.

The catalysed reaction is L-glutaminyl-[peptide chain release factor] + S-adenosyl-L-methionine = N(5)-methyl-L-glutaminyl-[peptide chain release factor] + S-adenosyl-L-homocysteine + H(+). Methylates the class 1 translation termination release factors RF1/PrfA and RF2/PrfB on the glutamine residue of the universally conserved GGQ motif. The polypeptide is Release factor glutamine methyltransferase (Pseudomonas aeruginosa (strain ATCC 15692 / DSM 22644 / CIP 104116 / JCM 14847 / LMG 12228 / 1C / PRS 101 / PAO1)).